The chain runs to 209 residues: Chaperone protein TorD (209 aa).

This sequence belongs to the TorD/DmsD family. TorD subfamily.

The protein resides in the cytoplasm. Its function is as follows. Involved in the biogenesis of TorA. Acts on TorA before the insertion of the molybdenum cofactor and, as a result, probably favors a conformation of the apoenzyme that is competent for acquiring the cofactor. The polypeptide is Chaperone protein TorD (Salmonella bongori (strain ATCC 43975 / DSM 13772 / NCTC 12419)).